We begin with the raw amino-acid sequence, 289 residues long: ATP synthase gamma chain (289 aa).

This sequence belongs to the ATPase gamma chain family. In terms of assembly, F-type ATPases have 2 components, CF(1) - the catalytic core - and CF(0) - the membrane proton channel. CF(1) has five subunits: alpha(3), beta(3), gamma(1), delta(1), epsilon(1). CF(0) has three main subunits: a, b and c.

It is found in the cell inner membrane. In terms of biological role, produces ATP from ADP in the presence of a proton gradient across the membrane. The gamma chain is believed to be important in regulating ATPase activity and the flow of protons through the CF(0) complex. This chain is ATP synthase gamma chain, found in Dichelobacter nodosus (strain VCS1703A).